Consider the following 198-residue polypeptide: Large ribosomal subunit protein bL25 (198 aa).

It belongs to the bacterial ribosomal protein bL25 family. CTC subfamily. As to quaternary structure, part of the 50S ribosomal subunit; part of the 5S rRNA/L5/L18/L25 subcomplex. Contacts the 5S rRNA. Binds to the 5S rRNA independently of L5 and L18.

Its function is as follows. This is one of the proteins that binds to the 5S RNA in the ribosome where it forms part of the central protuberance. The protein is Large ribosomal subunit protein bL25 of Streptomyces coelicolor (strain ATCC BAA-471 / A3(2) / M145).